Here is a 135-residue protein sequence, read N- to C-terminus: UPF0329 protein ECU07_1860/ECU10_0040/ECU11_2100 (135 aa).

This sequence belongs to the UPF0329 family.

The protein is UPF0329 protein ECU07_1860/ECU10_0040/ECU11_2100 of Encephalitozoon cuniculi (strain GB-M1) (Microsporidian parasite).